We begin with the raw amino-acid sequence, 725 residues long: MANNNLNRPLNTNVADSSNSSSTPGTAPPPSSSDPQVLGHQAPSSSASSLTEDCSSSFARDLNSYNNGQSGATGAVSWEAPHEPSEANAVSQIHPRNGEHSLQQKPKPQKVSGSSSLATSERYKTELCRPFEESGICKYGHKCQFAHGYRELRTLSRHPKYKTEPCRTFHSVGFCPYGTRCHFIHNQPEQQPVLSESTLEEPSSFNGSNVLHLGVNGEQQPGLQSDSPSGFLSVNSQALQAPLQLNQQALSSGGVMPSSHPAAANLRMMCCRTSSSTTAHDADKDPDKDADKDPSNNSANDALAFPQEPGDFSPVAFQNPNTATTTPTAFYNNQQQMGLAASAQFQMPLARPLPSATIFGQASVGPALTPGAAMAPGAALAPAAALTPAAALAPGAAMALGAAMATGAAMATGAALTPGAALALGAAMAAGAALAPGAAMAPGAAMATGAALAFGAAMATGTTLTPGAAMALGAAMATGAALAPGAAVAPRAALAPRAAFAPGAAALAPRAALPPGAALTPGAALAPGAALAPRAALPPGATLRPGAALIPRAALAPGAALAPGAALTPGAALAPGATLAPRAALAPGAALAPRITITSRAAITPGVAIAPGVATASTGILAPGAATATVGNTSSTTITAATAAEGAAPHFTFQLPDVESESESESLEFDVVTSTLDSLLVSDDEDEDDFLRRSSSSSSLNESEFDNTNSSRRLPIFSRFSDSEK.

The segment covering 1–25 (MANNNLNRPLNTNVADSSNSSSTPG) has biased composition (low complexity). The tract at residues 1–119 (MANNNLNRPL…KVSGSSSLAT (119 aa)) is disordered. Polar residues-rich tracts occupy residues 42 to 72 (APSS…QSGA) and 100 to 119 (HSLQ…SLAT). 2 C3H1-type zinc fingers span residues 122 to 150 (RYKT…HGYR) and 160 to 188 (KYKT…HNQP). The interval 193–711 (VLSESTLEEP…ESEFDNTNSS (519 aa)) is necessary for cytoplasmic localization. The segment at 276-310 (STTAHDADKDPDKDADKDPSNNSANDALAFPQEPG) is disordered. Residues 280-294 (HDADKDPDKDADKDP) are compositionally biased toward basic and acidic residues. 4 helical membrane passes run 380–400 (LAPA…AMAL), 420–440 (AALA…GAAM), 441–461 (APGA…MATG), and 468–488 (AAMA…GAAV). The interval 686–709 (DEDDFLRRSSSSSSLNESEFDNTN) is disordered. Low complexity predominate over residues 693-702 (RSSSSSSLNE).

In terms of tissue distribution, expressed in placenta and extraembryonic tissues (at protein level). Not detected in embryos and fetus.

Its subcellular location is the cytoplasm. The protein resides in the membrane. Functionally, placenta-specific zinc-finger RNA-binding protein that destabilizes cytoplasmic AU-rich element (ARE)-containing mRNA transcripts by promoting their poly(A) tail removal or deadenylation, and hence provide a mechanism for attenuating protein synthesis. Binds to the 3'-UTR ARE of placental target mRNAs, such as TNF, HBEGF and LIPG. Involved in placental expression of many genes important for normal placental physiology. This is mRNA decay activator protein ZFP36L3 from Mus musculus (Mouse).